The chain runs to 142 residues: MIGTLKRAWIPLLILVVVAIAGFTVQRIRTFFGSEGILVTPKVFADDPEPFDPKVVEYEVSGSGSYVNINYLDLDAKPQRIDGAALPWSLTLKTTAPSAAPNILAQGDGTSITCRITVDGEVKDERTATGVDALTYCFVKSA.

A helical transmembrane segment spans residues 7–26 (RAWIPLLILVVVAIAGFTVQ).

Belongs to the MmpS family.

Its subcellular location is the cell membrane. The polypeptide is Probable transport accessory protein MmpS5 (mmpS5) (Mycobacterium bovis (strain ATCC BAA-935 / AF2122/97)).